The chain runs to 1159 residues: DNA-directed RNA polymerase subunit beta' (1159 aa).

The Mg(2+) site is built by Asp-398, Asp-400, and Asp-402. The Zn(2+) site is built by Cys-741, Cys-815, Cys-822, and Cys-825.

Belongs to the RNA polymerase beta' chain family. As to quaternary structure, the RNAP catalytic core consists of 2 alpha, 1 beta, 1 beta' and 1 omega subunit. When a sigma factor is associated with the core the holoenzyme is formed, which can initiate transcription. Requires Mg(2+) as cofactor. The cofactor is Zn(2+).

The catalysed reaction is RNA(n) + a ribonucleoside 5'-triphosphate = RNA(n+1) + diphosphate. Its function is as follows. DNA-dependent RNA polymerase catalyzes the transcription of DNA into RNA using the four ribonucleoside triphosphates as substrates. This chain is DNA-directed RNA polymerase subunit beta', found in Porphyromonas cangingivalis.